We begin with the raw amino-acid sequence, 315 residues long: MNPNFLDFEQPIADLQAKIEELRLVGNDNSLNIGDEIARLQDKSSTLTEDIFGKLTSWQIARLARHPRRPYTLDYIQHIFTEFDELHGDRHFSDDAAIVGGIARLDDQPVMVIGHQKGREVREKVRRNFGMPRPEGYRKACRLMEMAERFKMPILTFIDTPGAYPGIDAEERNQSEAIAWNLRVMSRLKTPIIATVIGEGGSGGALAIGVCDQLNMLQYSTYAVISPEGCASILWKTAEKAPDAAEAMGITADRLKGLGIVDKVIAEPLGGAHRDPAAAAATIRGELASQLAMLKKLDNEALLARRYERLMSYGL.

The CoA carboxyltransferase C-terminal domain occupies 39–293 (RLQDKSSTLT…RGELASQLAM (255 aa)).

The protein belongs to the AccA family. As to quaternary structure, acetyl-CoA carboxylase is a heterohexamer composed of biotin carboxyl carrier protein (AccB), biotin carboxylase (AccC) and two subunits each of ACCase subunit alpha (AccA) and ACCase subunit beta (AccD).

The protein localises to the cytoplasm. It catalyses the reaction N(6)-carboxybiotinyl-L-lysyl-[protein] + acetyl-CoA = N(6)-biotinyl-L-lysyl-[protein] + malonyl-CoA. Its pathway is lipid metabolism; malonyl-CoA biosynthesis; malonyl-CoA from acetyl-CoA: step 1/1. Its function is as follows. Component of the acetyl coenzyme A carboxylase (ACC) complex. First, biotin carboxylase catalyzes the carboxylation of biotin on its carrier protein (BCCP) and then the CO(2) group is transferred by the carboxyltransferase to acetyl-CoA to form malonyl-CoA. The protein is Acetyl-coenzyme A carboxylase carboxyl transferase subunit alpha of Pseudomonas fluorescens (strain SBW25).